We begin with the raw amino-acid sequence, 658 residues long: Exoribonuclease 2 (658 aa).

An RNB domain is found at 189 to 530 (REDLTSLYFT…VNHRLIKQVL (342 aa)). An S1 motif domain is found at 576 to 658 (AVEFDCEIAD…ETRSIVGNII (83 aa)).

The protein belongs to the RNR ribonuclease family. RNase II subfamily.

It localises to the cytoplasm. The catalysed reaction is Exonucleolytic cleavage in the 3'- to 5'-direction to yield nucleoside 5'-phosphates.. In terms of biological role, involved in mRNA degradation. Hydrolyzes single-stranded polyribonucleotides processively in the 3' to 5' direction. The chain is Exoribonuclease 2 from Actinobacillus pleuropneumoniae serotype 7 (strain AP76).